A 143-amino-acid chain; its full sequence is uncharacterized protein (143 aa).

Helical transmembrane passes span 20 to 39 and 113 to 135; these read FKYCSTSLFVLILFNSWITV and YFSLQISLSFAFSGICVKYITGL.

It is found in the membrane. This is an uncharacterized protein from Saccharomyces cerevisiae (strain ATCC 204508 / S288c) (Baker's yeast).